A 267-amino-acid chain; its full sequence is tRNA pseudouridine synthase A (267 aa).

Asp51 serves as the catalytic Nucleophile. Tyr109 provides a ligand contact to substrate.

Belongs to the tRNA pseudouridine synthase TruA family.

It carries out the reaction uridine(38/39/40) in tRNA = pseudouridine(38/39/40) in tRNA. In terms of biological role, formation of pseudouridine at positions 38, 39 and 40 in the anticodon stem and loop of transfer RNAs. The polypeptide is tRNA pseudouridine synthase A (Methanothrix thermoacetophila (strain DSM 6194 / JCM 14653 / NBRC 101360 / PT) (Methanosaeta thermophila)).